A 268-amino-acid polypeptide reads, in one-letter code: Tryptophan synthase alpha chain (268 aa).

Catalysis depends on proton acceptor residues glutamate 49 and aspartate 60.

The protein belongs to the TrpA family. In terms of assembly, tetramer of two alpha and two beta chains.

The enzyme catalyses (1S,2R)-1-C-(indol-3-yl)glycerol 3-phosphate + L-serine = D-glyceraldehyde 3-phosphate + L-tryptophan + H2O. The protein operates within amino-acid biosynthesis; L-tryptophan biosynthesis; L-tryptophan from chorismate: step 5/5. Functionally, the alpha subunit is responsible for the aldol cleavage of indoleglycerol phosphate to indole and glyceraldehyde 3-phosphate. In Escherichia coli (strain SE11), this protein is Tryptophan synthase alpha chain.